Reading from the N-terminus, the 381-residue chain is E3 ubiquitin-protein ligase Fancl (381 aa).

The UBC-RWD region (URD) stretch occupies residues 110–293 (NIYYDILALY…MFDLCYFPMP (184 aa)). The RING-CH-type; degenerate zinc-finger motif lies at 303 to 374 (EEDNEELRCN…PFCKAKLSTS (72 aa)). Residues Cys311, Cys314, Cys329, Cys334, His339, Cys342, Cys364, and Cys367 each coordinate Zn(2+).

Interacts (via C-terminus) with FANCI and Fancd2.

The protein localises to the nucleus. It carries out the reaction S-ubiquitinyl-[E2 ubiquitin-conjugating enzyme]-L-cysteine + [acceptor protein]-L-lysine = [E2 ubiquitin-conjugating enzyme]-L-cysteine + N(6)-ubiquitinyl-[acceptor protein]-L-lysine.. Its pathway is protein modification; protein ubiquitination. Its function is as follows. Ubiquitin ligase protein that mediates monoubiquitination of Fancd2. Ubiquitination of Fancd2 is stimulated by ionising radiation. Together with Fancd2, and probably FANCI, involved in DNA repair of damage caused by agents that induce interstrand cross-links but not agents that cause double strand breaks. The polypeptide is E3 ubiquitin-protein ligase Fancl (Drosophila melanogaster (Fruit fly)).